The following is a 1147-amino-acid chain: Protein lin-41 (1147 aa).

The disordered stretch occupies residues 1–93 (MATIVPCSLE…PPSMIQSPQQ (93 aa)). Residues 33–47 (SGNELSMGGSSSEGD) are compositionally biased toward low complexity. The segment covering 48–65 (SMSHHRGEHSPNHHHQDN) has biased composition (basic and acidic residues). A compositionally biased stretch (low complexity) spans 84–93 (PPSMIQSPQQ). The segment at 114-155 (CSVCSKSSTIGVLPFVCAHKTCQSCYQMTPSSYDRRACKLCG) adopts an RING-type zinc-finger fold. The B box-type; atypical zinc-finger motif lies at 366–412 (MGPIQCQGCESKISFAYCMQCQEALCIHCVQAHQRVRATKQHAFVEL). Zn(2+) is bound by residues cysteine 371, cysteine 374, cysteine 394, and histidine 398. Residues 565–618 (AFDTHVNALEERRKELLKRVETVKNLKLSVLISQAESLQSKQIDLQQAIQTATK) are a coiled coil. The stretch at 723–817 (ACGDLLSSSI…ISGCPTTMDI (95 aa)) is one Filamin repeat. NHL repeat units lie at residues 832 to 875 (ILTF…FDKD), 879 to 922 (ISKF…FDEN), 926 to 969 (LLKF…FTPQ), 974 to 1017 (RKCG…LSPR), 1022 to 1065 (MKVY…FASD), and 1107 to 1147 (SAPT…IRVF). The segment at 1104 to 1123 (AFSSAPTPLTPSPRQLLDRP) is disordered.

The protein belongs to the TRIM/RBCC family.

The protein resides in the cytoplasm. It localises to the P-body. In terms of biological role, heterochronic protein which acts downstream of let-7 in temporal patterning. Plays a role in the developmental timing of postembryonic hypodermal seam cell division and fusion events and adult alae production. Represses lin-29 during late larval stages, which prevents terminal differentiation of hypodermal seam cells and promotes their division. Involved in post-transcriptional gene regulation, uses two independent pathways. Has direct and specific RNA-binding activity and, depending on the location (5'UTR or 3'UTR) of the target site, triggers either mRNA decay or repression of translation. Degrades the mRNA of transcription factor dmd-3 to govern the timing and extent of male tail tip morphogenesis. Plays a role in the sexual maturation of the nervous system. The polypeptide is Protein lin-41 (Caenorhabditis elegans).